The primary structure comprises 438 residues: DNA primase DnaG (438 aa).

In terms of domain architecture, Toprim spans aspartate 169–tyrosine 243. Residues glutamate 175, aspartate 217, and aspartate 219 each coordinate Mg(2+).

It belongs to the archaeal DnaG primase family. As to quaternary structure, forms a ternary complex with MCM helicase and DNA. It depends on Mg(2+) as a cofactor.

The catalysed reaction is ssDNA + n NTP = ssDNA/pppN(pN)n-1 hybrid + (n-1) diphosphate.. Its function is as follows. RNA polymerase that catalyzes the synthesis of short RNA molecules used as primers for DNA polymerase during DNA replication. In Methanococcus maripaludis (strain C6 / ATCC BAA-1332), this protein is DNA primase DnaG.